We begin with the raw amino-acid sequence, 574 residues long: Protein OBERON 2 (574 aa).

Composition is skewed to polar residues over residues 1-10 (MGTSSGSNHP) and 65-76 (SMSQKTEPDSME). The interval 1–76 (MGTSSGSNHP…SQKTEPDSME (76 aa)) is disordered. The PHD-type zinc finger occupies 226–291 (LCMCTICNKF…VFKCRACNRT (66 aa)). Residues 416-524 (KKARMALETC…LFEKIKLQEN (109 aa)) are a coiled coil.

In terms of assembly, self-interacts. Interacts with OBE1, OBE3 and OBE4. Binds to VPg of pea seed borne mosaic virus (PSbMV), turnip mosaic virus (TuMV) and lettuce mosaic virus (LMV), but not with VPg of tobacco etch virus (TEV), cowpea mosaic virus (CPMV), tomato black ring virus (TBRV) and grapevine fan leaf virus (GFLV). Expressed in roots, seedlings, stems, leaves, flowers and siliques, especially in the vasculature.

The protein resides in the nucleus. Its function is as follows. Probable transcription factor that acts together with OBE1 for the maintenance and/or establishment of both the shoot and root meristems, probably by controlling the expression of the meristem genes such as WUS, PLT1 and PLT2 and of genes required for auxin responses. Promotes cell meristematic activity via the WUSCHEL-CLAVATA pathway. Involved in the development of the basal pole and in auxin-mediated root and vascular development in the embryo. Confers sensitivity to turnip mosaic virus (TuMV) probably by promoting viral movement and multiplication via interaction with TuMV VPg. The sequence is that of Protein OBERON 2 from Arabidopsis thaliana (Mouse-ear cress).